The primary structure comprises 1670 residues: Collagen alpha-3(IV) chain (1670 aa).

An N-terminal signal peptide occupies residues 1–28 (MSARTAPRPQVLLLPLLLVLLAAAPAAS). A 7S domain region spans residues 29–42 (KGCVCKDKGQCFCD). The triple-helical region stretch occupies residues 43–1438 (GAKGEKGEKG…KGKRGDSGSP (1396 aa)). Disordered stretches follow at residues 49–78 (GEKGFPGPPGSPGQKGFTGPEGLPGPQGPK), 167–469 (LDAK…DGPK), and 502–1442 (GRQG…ATWT). The segment covering 176 to 200 (PGAPGPQGLPGPPGFPGPVGPPGPP) has biased composition (pro residues). The segment covering 202 to 212 (FFGFPGAMGPR) has biased composition (low complexity). Positions 217–231 (HMGERVIGHKGERGV) are enriched in basic and acidic residues. Residues 242–251 (GTVIVTLTGP) are compositionally biased toward low complexity. Asn253 carries an N-linked (GlcNAc...) asparagine glycan. A compositionally biased stretch (basic and acidic residues) spans 253 to 266 (NRTDLKGEKGDKGA). Over residues 382 to 394 (SPGSSRPGLRGAP) the composition is skewed to low complexity. Positions 402-411 (SKGERGRPGK) are enriched in basic and acidic residues. Low complexity predominate over residues 415-428 (GTPGSPGCAGSPGL). Composition is skewed to pro residues over residues 429-438 (PGSPGPPGPP), 598-618 (PGDPGSPGSPGPAGPAGPPGY), and 654-675 (VPGPPGPPGPPGHPGPQGPPGI). Residues 791–793 (RGD) carry the Cell attachment site motif. The segment covering 900–909 (IGPPGPPGNP) has biased composition (pro residues). Residues 974 to 987 (VPGMPGLKGLKGLP) show a composition bias toward low complexity. Residues 996 to 998 (RGD) carry the Cell attachment site motif. Composition is skewed to low complexity over residues 1013–1025 (IPGSMGNMGMPGS), 1094–1105 (LGPAGPEGAPGS), and 1118–1133 (HGDLGFKGIKGLLGPP). A compositionally biased stretch (pro residues) spans 1135-1148 (IRGPPGLPGFPGSP). The Cell attachment site motif lies at 1154-1156 (RGD). 2 stretches are compositionally biased toward low complexity: residues 1230–1250 (PGAIIPGQTGNRGPPGSRGSP) and 1290–1299 (PPGRLGAPGT). A Cell attachment site motif is present at residues 1306–1308 (RGD). Residues 1332-1341 (PPGPIGPKGP) show a composition bias toward pro residues. Short sequence motifs (cell attachment site) lie at residues 1345–1347 (RGD) and 1432–1434 (RGD). Residues 1427 to 1444 (GLKGKRGDSGSPATWTTR) are epitope recognized by Goodpasture antibodies. Residues 1445–1669 (GFVFTRHSQT…SRCQVCMKKR (225 aa)) form the Collagen IV NC1 domain. Disulfide bonds link Cys1460/Cys1551, Cys1493/Cys1548, Cys1505/Cys1511, Cys1570/Cys1665, Cys1604/Cys1662, and Cys1616/Cys1622. A required for the anti-angiogenic activity of tumstatin region spans residues 1479-1557 (NQRAHGQDLG…CTVCEGPAIA (79 aa)). Residue Met1533 forms an S-Lysyl-methionine sulfilimine (Met-Lys) (interchain with K-1651) linkage. Residues 1610–1628 (ASPFLECHGRGTCNYYSNS) are required for the anti-tumor cell activity of tumstatin. An S-Lysyl-methionine sulfilimine (Lys-Met) (interchain with M-1533) cross-link involves residue Lys1651.

This sequence belongs to the type IV collagen family. There are six type IV collagen isoforms, alpha 1(IV)-alpha 6(IV), each of which can form a triple helix structure with 2 other chains to generate type IV collagen network. The alpha 3(IV) chain forms a triple helical protomer with alpha 4(IV) and alpha 5(IV); this triple helical structure dimerizes through NC1-NC1 domain interactions such that the alpha 3(IV), alpha 4(IV) and alpha 5(IV) chains of one protomer connect with the alpha 5(IV), alpha 4(IV) and alpha 3(IV) chains of the opposite promoter, respectively. Interacts with ITGB3. Associates with LAMB2 at the neuromuscular junction and in GBM. Post-translationally, prolines at the third position of the tripeptide repeating unit (G-X-Y) are hydroxylated in some or all of the chains. Isoform 2 contains an additional N-linked glycosylation site. In terms of processing, type IV collagens contain numerous cysteine residues which are involved in inter- and intramolecular disulfide bonding. 12 of these, located in the NC1 domain, are conserved in all known type IV collagens. Post-translationally, the trimeric structure of the NC1 domains is stabilized by covalent bonds between Lys and Met residues. Phosphorylated. Thought to be phosphorylated by CERT, but CERT does not have kinase activity. Alpha 3 and alpha 4 type IV collagens are colocalized and present in kidney, eye, basement membranes of lens capsule, cochlea, lung, skeletal muscle, aorta, synaptic fibers, fetal kidney and fetal lung. PubMed:8083201 reports similar levels of expression of alpha 3 and alpha 4 type IV collagens in kidney, but PubMed:7523402 reports that in kidney levels of alpha 3 type IV collagen are significantly lower than those of alpha 4 type IV collagen. According to PubMed:8083201, alpha 3 type IV collagen is not detected in heart, brain, placenta, liver, pancreas, extrasynaptic muscle fibers, endoneurial and perineurial nerves, fetal brain, fetal heart and fetal liver. According to PubMed:7523402, alpha 3 type IV collagen is strongly expressed in pancreas, neuroretina and calvaria and not expressed in adrenal, ileum and skin. Isoform 1 and isoform 3 are strongly expressed in kidney, lung, suprarenal capsule, muscle and spleen, in each of these tissues isoform 1 is more abundant than isoform 3. Isoform 1 and isoform 3 are expressed at low levels in artery, fat, pericardium and peripherical nerve, but not in placenta, mesangium, skin, pleura and cultured umbilical endothelial cells.

The protein resides in the secreted. It localises to the extracellular space. The protein localises to the extracellular matrix. Its subcellular location is the basement membrane. In terms of biological role, type IV collagen is the major structural component of glomerular basement membranes (GBM), forming a 'chicken-wire' meshwork together with laminins, proteoglycans and entactin/nidogen. Tumstatin, a cleavage fragment corresponding to the collagen alpha 3(IV) NC1 domain, possesses both anti-angiogenic and anti-tumor cell activity; these two anti-tumor properties may be regulated via RGD-independent ITGB3-mediated mechanisms. The protein is Collagen alpha-3(IV) chain (COL4A3) of Homo sapiens (Human).